The primary structure comprises 389 residues: Probable protein phosphatase 2C 12 (389 aa).

The PPM-type phosphatase domain maps to V42–L356. Mn(2+) contacts are provided by D77 and G78. Residues A119–S145 are disordered. Over residues S121 to S145 the composition is skewed to low complexity. Mn(2+)-binding residues include D301 and D347.

The protein belongs to the PP2C family. The cofactor is Mg(2+). Mn(2+) serves as cofactor.

The enzyme catalyses O-phospho-L-seryl-[protein] + H2O = L-seryl-[protein] + phosphate. It catalyses the reaction O-phospho-L-threonyl-[protein] + H2O = L-threonyl-[protein] + phosphate. The sequence is that of Probable protein phosphatase 2C 12 from Oryza sativa subsp. japonica (Rice).